Here is a 290-residue protein sequence, read N- to C-terminus: ATP synthase gamma chain (290 aa).

Belongs to the ATPase gamma chain family. In terms of assembly, F-type ATPases have 2 components, CF(1) - the catalytic core - and CF(0) - the membrane proton channel. CF(1) has five subunits: alpha(3), beta(3), gamma(1), delta(1), epsilon(1). CF(0) has three main subunits: a, b and c.

It is found in the cell inner membrane. In terms of biological role, produces ATP from ADP in the presence of a proton gradient across the membrane. The gamma chain is believed to be important in regulating ATPase activity and the flow of protons through the CF(0) complex. This Dictyoglomus thermophilum (strain ATCC 35947 / DSM 3960 / H-6-12) protein is ATP synthase gamma chain.